The sequence spans 154 residues: Small ribosomal subunit protein bS18 (154 aa).

The segment at methionine 1 to proline 82 is disordered. Positions lysine 8–lysine 19 are enriched in low complexity. Basic and acidic residues predominate over residues alanine 20–lysine 32. A compositionally biased stretch (low complexity) spans threonine 33–valine 49. Over residues glutamate 50–proline 69 the composition is skewed to basic and acidic residues.

The protein belongs to the bacterial ribosomal protein bS18 family. In terms of assembly, part of the 30S ribosomal subunit. Forms a tight heterodimer with protein bS6.

In terms of biological role, binds as a heterodimer with protein bS6 to the central domain of the 16S rRNA, where it helps stabilize the platform of the 30S subunit. The protein is Small ribosomal subunit protein bS18 of Malacoplasma penetrans (strain HF-2) (Mycoplasma penetrans).